Consider the following 655-residue polypeptide: Broad substrate specificity ATP-binding cassette transporter ABCG2 (655 aa).

Over 1-395 (MSSSNVEVFI…KNLLGNPQAS (395 aa)) the chain is Cytoplasmic. Residues 37–286 (LSFHNICYRV…FESAGYHCEA (250 aa)) enclose the ABC transporter domain. ATP contacts are provided by residues 80–87 (GPTGGGKS), 184–190 (RGVSGGE), Glu211, and His243. The residue at position 362 (Thr362) is a Phosphothreonine; by PIM1. The region spanning 389 to 651 (LGNPQASIAQ…TIAYLKLLFL (263 aa)) is the ABC transmembrane type-2 domain. Residues 396–416 (IAQIIVTVVLGLVIGAIYFGL) traverse the membrane as a helical segment. At 417-428 (KNDSTGIQNRAG) the chain is on the extracellular side. Residues 429-449 (VLFFLTTNQCFSSVSAVELFV) form a helical membrane-spanning segment. The Cytoplasmic portion of the chain corresponds to 450-477 (VEKKLFIHEYISGYYRVSSYFLGKLLSD). The helical transmembrane segment at 478-498 (LLPMRMLPSIIFTCIVYFMLG) threads the bilayer. Residues 499-506 (LKPKADAF) lie on the Extracellular side of the membrane. The chain crosses the membrane as a helical span at residues 507-527 (FVMMFTLMMVAYSASSMALAI). At 528–535 (AAGQSVVS) the chain is on the cytoplasmic side. A helical transmembrane segment spans residues 536–556 (VATLLMTICFVFMMIFSGLLV). Topologically, residues 557-630 (NLTTIASWLS…LSPWGLWKNH (74 aa)) are extracellular. A disulfide bond links Cys592 and Cys608. N-linked (GlcNAc...) asparagine glycosylation is present at Asn596. The chain crosses the membrane as a helical span at residues 631–651 (VALACMIVIFLTIAYLKLLFL). The Cytoplasmic segment spans residues 652–655 (KKYS).

It belongs to the ABC transporter superfamily. ABCG family. Eye pigment precursor importer (TC 3.A.1.204) subfamily. Homodimer; disulfide-linked. The minimal functional unit is a homodimer, but the major oligomeric form in plasma membrane is a homotetramer with possibility of higher order oligomerization up to homododecamers. Post-translationally, N-glycosylated. Glycosylation-deficient ABCG2 is normally expressed and functional. Phosphorylated. Phosphorylation at Thr-362 by PIM1 is induced by drugs like mitoxantrone and is associated with cells increased drug resistance. It regulates the localization to the plasma membrane, the homooligomerization and therefore, the activity of the transporter. As to expression, highly expressed in placenta. Low expression in small intestine, liver and colon. Expressed in brain (at protein level).

The protein localises to the cell membrane. It localises to the apical cell membrane. Its subcellular location is the mitochondrion membrane. The catalysed reaction is ATP + H2O + xenobioticSide 1 = ADP + phosphate + xenobioticSide 2.. It carries out the reaction urate(in) + ATP + H2O = urate(out) + ADP + phosphate + H(+). The enzyme catalyses indoxyl sulfate(in) + ATP + H2O = indoxyl sulfate(out) + ADP + phosphate + H(+). It catalyses the reaction sphing-4-enine 1-phosphate(in) + ATP + H2O = sphing-4-enine 1-phosphate(out) + ADP + phosphate + H(+). The catalysed reaction is estrone 3-sulfate(in) + ATP + H2O = estrone 3-sulfate(out) + ADP + phosphate + H(+). It carries out the reaction dehydroepiandrosterone 3-sulfate(in) + ATP + H2O = dehydroepiandrosterone 3-sulfate(out) + ADP + phosphate + H(+). The enzyme catalyses 4-methylumbelliferone sulfate(in) + ATP + H2O = 4-methylumbelliferone sulfate(out) + ADP + phosphate + H(+). It catalyses the reaction 5,7-dimethyl-2-methylamino-4-(3-pyridylmethyl)-1,3-benzothiazol-6-yl beta-D-glucuronate(in) + ATP + H2O = 5,7-dimethyl-2-methylamino-4-(3-pyridylmethyl)-1,3-benzothiazol-6-yl beta-D-glucuronate(out) + ADP + phosphate + H(+). The catalysed reaction is 4-methylumbelliferone beta-D-glucuronate(in) + ATP + H2O = 4-methylumbelliferone beta-D-glucuronate(out) + ADP + phosphate + H(+). It carries out the reaction 5,7-dimethyl-2-methylamino-4-(3-pyridylmethyl)-1,3-benzothiazol-6-yl sulfate(in) + ATP + H2O = 5,7-dimethyl-2-methylamino-4-(3-pyridylmethyl)-1,3-benzothiazol-6-yl sulfate(out) + ADP + phosphate + H(+). The enzyme catalyses 17beta-estradiol 17-O-(beta-D-glucuronate)(in) + ATP + H2O = 17beta-estradiol 17-O-(beta-D-glucuronate)(out) + ADP + phosphate + H(+). It catalyses the reaction methotrexate(in) + ATP + H2O = methotrexate(out) + ADP + phosphate + H(+). The catalysed reaction is riboflavin(in) + ATP + H2O = riboflavin(out) + ADP + phosphate + H(+). It carries out the reaction pheophorbide a(in) + ATP + H2O = pheophorbide a(out) + ADP + phosphate + H(+). The enzyme catalyses itaconate(in) + ATP + H2O = itaconate(out) + ADP + phosphate + H(+). With respect to regulation, specifically inhibited by the fungal toxin fumitremorgin C and Ko143. In terms of biological role, broad substrate specificity ATP-dependent transporter of the ATP-binding cassette (ABC) family that actively extrudes a wide variety of physiological compounds, dietary toxins and xenobiotics from cells. Involved in porphyrin homeostasis, mediating the export of protoporphyrin IX (PPIX) from both mitochondria to cytosol and cytosol to extracellular space, it also functions in the cellular export of heme. Also mediates the efflux of sphingosine-1-P from cells. Acts as a urate exporter functioning in both renal and extrarenal urate excretion. In kidney, it also functions as a physiological exporter of the uremic toxin indoxyl sulfate. Also involved in the excretion of steroids like estrone 3-sulfate/E1S, 3beta-sulfooxy-androst-5-en-17-one/DHEAS, and other sulfate conjugates. Mediates the secretion of the riboflavin and biotin vitamins into milk. Extrudes pheophorbide a, a phototoxic porphyrin catabolite of chlorophyll, reducing its bioavailability. Plays an important role in the exclusion of xenobiotics from the brain. It confers to cells a resistance to multiple drugs and other xenobiotics including mitoxantrone, pheophorbide, camptothecin, methotrexate, azidothymidine, and the anthracyclines daunorubicin and doxorubicin, through the control of their efflux. In placenta, it limits the penetration of drugs from the maternal plasma into the fetus. May play a role in early stem cell self-renewal by blocking differentiation. In inflammatory macrophages, exports itaconate from the cytosol to the extracellular compartment and limits the activation of TFEB-dependent lysosome biogenesis involved in antibacterial innate immune response. In Homo sapiens (Human), this protein is Broad substrate specificity ATP-binding cassette transporter ABCG2 (ABCG2).